Reading from the N-terminus, the 790-residue chain is Potassium transporter 22 (790 aa).

The Cytoplasmic portion of the chain corresponds to 1–64; it reads MAQQQGQGAG…HGEGWARTLR (64 aa). Residues 65-85 traverse the membrane as a helical segment; it reads LAFQCFGVLYGDIGTSPLYVY. Topologically, residues 86–98 are extracellular; the sequence is STTFDGGIRHTDD. Residues 99 to 119 form a helical membrane-spanning segment; sequence LLGVLSLIIYSFLLFTIIKYV. Residues 120–198 are Cytoplasmic-facing; that stretch reads YIALRANDDG…DLLENSRPVR (79 aa). Residues 199–219 traverse the membrane as a helical segment; sequence ISLFLLTILATAMVISDACLT. The Extracellular segment spans residues 220 to 236; sequence PAISVLSAVGGLKDKAP. Residues 237 to 257 traverse the membrane as a helical segment; it reads HLNTEQVVWVTVGILVMLFAV. The Cytoplasmic segment spans residues 258-264; that stretch reads QRFGTDK. A helical transmembrane segment spans residues 265–285; that stretch reads VGYLFAPVVLLWLLLIGGVGV. At 286 to 318 the chain is on the extracellular side; sequence YNLAAHDVGVLRAFNPKYILDYFRRNGRHGWVS. Residues 319 to 339 form a helical membrane-spanning segment; that stretch reads LGGVLLCFTGTEALFADLGCF. Topologically, residues 340–345 are cytoplasmic; that stretch reads SIRSIQ. The chain crosses the membrane as a helical span at residues 346–366; it reads LSFAFGLVPAVLLAYAGQAAY. The Extracellular segment spans residues 367 to 385; it reads LRVYPDHVGDAFYASTPQV. Residues 386–406 traverse the membrane as a helical segment; sequence LFWPTLVLALAASVVGSQAMI. Residues 407 to 437 are Cytoplasmic-facing; sequence SCAFATISHSQAMGCFPRVKVVHTSRQYQGQ. A helical membrane pass occupies residues 438-458; it reads VYIPEINLLLGAAACVVTVAA. The Extracellular portion of the chain corresponds to 459–469; that stretch reads RDTVVIGEAHG. The chain crosses the membrane as a helical span at residues 470–490; it reads ICVVLVMLITTLLLTVVMVLV. Residues 491–492 are Cytoplasmic-facing; it reads WR. A helical transmembrane segment spans residues 493-513; it reads VNIGWVLVFACVFASTESVYL. Topologically, residues 514–519 are extracellular; sequence TSVLYK. Residues 520-540 form a helical membrane-spanning segment; it reads FAHGGYIPVAMSAVLMGVMGV. Topologically, residues 541–790 are cytoplasmic; the sequence is WHYVHVRRYK…LLKVGMSYEI (250 aa).

The protein belongs to the HAK/KUP transporter (TC 2.A.72.3) family.

The protein resides in the membrane. In terms of biological role, high-affinity potassium transporter. This is Potassium transporter 22 (HAK22) from Oryza sativa subsp. japonica (Rice).